We begin with the raw amino-acid sequence, 565 residues long: uncharacterized protein (565 aa).

An N-terminal signal peptide occupies residues 1-21 (MKIPSQQVLLALPLLASPAQS). 2 N-linked (GlcNAc...) asparagine glycosylation sites follow: N46 and N88. One can recognise an FAD-binding PCMH-type domain in the interval 118-302 (QGIVPYYSVS…TSVTYKTHPK (185 aa)). H155 is modified (pros-8alpha-FAD histidine). N191, N314, N364, N371, and N484 each carry an N-linked (GlcNAc...) asparagine glycan.

It belongs to the oxygen-dependent FAD-linked oxidoreductase family. FAD is required as a cofactor.

It is found in the secreted. This is an uncharacterized protein from Arthroderma benhamiae (strain ATCC MYA-4681 / CBS 112371) (Trichophyton mentagrophytes).